Here is a 74-residue protein sequence, read N- to C-terminus: Kappa-scoloptoxin(07)-Ssm2a (74 aa).

Positions 1 to 19 (MLVFYALLFVTVFSNTVMG) are cleaved as a signal peptide. Positions 20 to 41 (ATIDKPIPKPILREAIEEIEVN) are excised as a propeptide.

This sequence belongs to the scoloptoxin-07 family. Post-translationally, contains 3 disulfide bonds. Expressed by the venom gland.

The protein resides in the secreted. Toxin that inhibits voltage-gated potassium channel currents in DRG neurons (IC(50)=about 570 nM). In vivo, induces neurotoxicity shown by twitching, paralysis, and body contraction. In vivo, insects injected with this toxin showed signs of neurotoxicity including twitching, paralysis, and body contraction. The chain is Kappa-scoloptoxin(07)-Ssm2a from Scolopendra mutilans (Chinese red-headed centipede).